The chain runs to 234 residues: Sugar fermentation stimulation protein A (234 aa).

Residues 201-220 (LLSEAQNKGVEVLAYKAELS) constitute a DNA-binding region (H-T-H motif).

The protein belongs to the SfsA family.

Its function is as follows. Binds to DNA non-specifically. Could be a regulatory factor involved in maltose metabolism. This Salmonella choleraesuis (strain SC-B67) protein is Sugar fermentation stimulation protein A.